We begin with the raw amino-acid sequence, 184 residues long: Photosystem I assembly protein Ycf4 (184 aa).

Helical transmembrane passes span 20-40 (GNFFWAFILFLGSLGFLVVGI) and 64-84 (IVMSFYGIAGLFISSYLWCTI).

It belongs to the Ycf4 family.

It is found in the plastid. It localises to the chloroplast thylakoid membrane. In terms of biological role, seems to be required for the assembly of the photosystem I complex. The polypeptide is Photosystem I assembly protein Ycf4 (Citrus sinensis (Sweet orange)).